Consider the following 223-residue polypeptide: Ribonuclease 3 (223 aa).

The RNase III domain occupies Tyr4–Gly127. Residue Glu40 participates in Mg(2+) binding. Residue Asp44 is part of the active site. Residues Asn113 and Glu116 each contribute to the Mg(2+) site. Residue Glu116 is part of the active site. In terms of domain architecture, DRBM spans Asp154–Lys223.

The protein belongs to the ribonuclease III family. In terms of assembly, homodimer. The cofactor is Mg(2+).

The protein resides in the cytoplasm. It carries out the reaction Endonucleolytic cleavage to 5'-phosphomonoester.. Digests double-stranded RNA. Involved in the processing of primary rRNA transcript to yield the immediate precursors to the large and small rRNAs (23S and 16S). Processes some mRNAs, and tRNAs when they are encoded in the rRNA operon. Processes pre-crRNA and tracrRNA of type II CRISPR loci if present in the organism. This chain is Ribonuclease 3, found in Sulfurovum sp. (strain NBC37-1).